Consider the following 543-residue polypeptide: Ipecac alkaloid beta-glucosidase 2 (543 aa).

A beta-D-glucoside contacts are provided by residues glutamine 36, histidine 140, 185–186, tyrosine 350, glutamate 422, tryptophan 471, and phenylalanine 487; that span reads NE. Residue glutamate 186 is the Proton donor of the active site. The Nucleophile role is filled by glutamate 422.

Belongs to the glycosyl hydrolase 1 family.

The protein resides in the cytoplasm. Its subcellular location is the cytosol. The enzyme catalyses deacetylipecoside + H2O = deacetylipecoside aglycone + D-glucose. The catalysed reaction is deacetylisoipecoside + H2O = deacetylisoipecoside aglycone + D-glucose. It participates in alkaloid biosynthesis. Beta-glucosidase catalyzing deglucosylation on N-deacetylisoipecoside and N-deacetylipecoside. This is Ipecac alkaloid beta-glucosidase 2 from Carapichea ipecacuanha (Ipecac).